The primary structure comprises 108 residues: Tetrahydromethanopterin S-methyltransferase subunit B (108 aa).

Residues 77-99 (FQGMFFGFWVTMAVLVLVTILAV) form a helical membrane-spanning segment.

It belongs to the MtrB family. In terms of assembly, the complex is composed of 8 subunits; MtrA, MtrB, MtrC, MtrD, MtrE, MtrF, MtrG and MtrH.

Its subcellular location is the cell membrane. It carries out the reaction 5-methyl-5,6,7,8-tetrahydromethanopterin + coenzyme M + 2 Na(+)(in) = 5,6,7,8-tetrahydromethanopterin + methyl-coenzyme M + 2 Na(+)(out). It functions in the pathway one-carbon metabolism; methanogenesis from CO(2); methyl-coenzyme M from 5,10-methylene-5,6,7,8-tetrahydromethanopterin: step 2/2. Part of a complex that catalyzes the formation of methyl-coenzyme M and tetrahydromethanopterin from coenzyme M and methyl-tetrahydromethanopterin. This is an energy-conserving, sodium-ion translocating step. This chain is Tetrahydromethanopterin S-methyltransferase subunit B, found in Methanococcus maripaludis (strain DSM 14266 / JCM 13030 / NBRC 101832 / S2 / LL).